We begin with the raw amino-acid sequence, 107 residues long: uncharacterized protein (107 aa).

One can recognise a Glutaredoxin domain in the interval 6–107 (KARIDQLVTA…QEMLEVALAS (102 aa)). K23 is a binding site for glutathione. [2Fe-2S] cluster is bound at residue C31. Residues R60 and 85 to 86 (SD) each bind glutathione.

Belongs to the glutaredoxin family. Monothiol subfamily.

This is an uncharacterized protein from Synechocystis sp. (strain ATCC 27184 / PCC 6803 / Kazusa).